The sequence spans 509 residues: MNEQQRLASQQVNSSTKKEEKDYSKYFESVYQPPSLKDAKKRGKEEVKIERDFGLPEEFRNFGTGRKFYIRTYGCQMNEHDTEVMAGIFTALGYEPTFSTEDADVVLLNTCAIRENAENKVFGELGHLKSLKRRNPDLLIGVCGCMSQEESVVNKIMQKNQHVDMVFGTHNIHRLPYILKDAMFSKETVVEVWSKEGDVIENLPKVRRGDIKAWVNIMYGCDKFCTYCIVPYTRGKERSRRPEDIIQEIRHLAANGYKEITLLGQNVNAYGKDFEDIEYGLGDLMDELRKVDIARIRFTTSHPRDFDDHLIEVLGKGGNLVEHIHLPVQSGSTEMLKIMARKYSREHYLELVRKIKEAIPNAVLTTDIIVGFPNETDEQFEETMSLYREVGFDTAFTFIYSPREGTPAAKMKDNVPMEVKKERLQRLNALVNKLAIEKNDRYKGQIVEVLVDGESKNNPEVLAGYTRTNKLVNFVAPKSLIGQLVKVKVTDAKTWSLNGELVEEPIEVE.

A compositionally biased stretch (polar residues) spans 1-15; that stretch reads MNEQQRLASQQVNSS. A disordered region spans residues 1-26; sequence MNEQQRLASQQVNSSTKKEEKDYSKY. The segment covering 16–25 has biased composition (basic and acidic residues); that stretch reads TKKEEKDYSK. The region spanning 66–184 is the MTTase N-terminal domain; that stretch reads RKFYIRTYGC…LPYILKDAMF (119 aa). [4Fe-4S] cluster-binding residues include Cys-75, Cys-111, Cys-145, Cys-221, Cys-225, and Cys-228. The Radical SAM core domain maps to 207-437; sequence RRGDIKAWVN…NALVNKLAIE (231 aa). The TRAM domain maps to 440–503; that stretch reads DRYKGQIVEV…TWSLNGELVE (64 aa).

Belongs to the methylthiotransferase family. MiaB subfamily. As to quaternary structure, monomer. [4Fe-4S] cluster serves as cofactor.

Its subcellular location is the cytoplasm. It catalyses the reaction N(6)-dimethylallyladenosine(37) in tRNA + (sulfur carrier)-SH + AH2 + 2 S-adenosyl-L-methionine = 2-methylsulfanyl-N(6)-dimethylallyladenosine(37) in tRNA + (sulfur carrier)-H + 5'-deoxyadenosine + L-methionine + A + S-adenosyl-L-homocysteine + 2 H(+). Functionally, catalyzes the methylthiolation of N6-(dimethylallyl)adenosine (i(6)A), leading to the formation of 2-methylthio-N6-(dimethylallyl)adenosine (ms(2)i(6)A) at position 37 in tRNAs that read codons beginning with uridine. This Bacillus thuringiensis (strain Al Hakam) protein is tRNA-2-methylthio-N(6)-dimethylallyladenosine synthase.